We begin with the raw amino-acid sequence, 26 residues long: Omega-conotoxin CVIC (26 aa).

Disulfide bonds link C1/C16, C8/C20, and C15/C26. Position 26 is a cysteine amide (C26).

The protein belongs to the conotoxin O1 superfamily. Expressed by the venom duct.

The protein resides in the secreted. Functionally, omega-conotoxins act at presynaptic membranes, they bind and block voltage-gated calcium channels (Cav). This toxin blocks N-, P- and Q-type calcium channels. The protein is Omega-conotoxin CVIC of Conus catus (Cat cone).